The chain runs to 920 residues: MIGRLFRAHGEFCASHPWEVIVALLTITACMLTVDKNNTLDASSGLGTATASAAAAGGSGSGAGSGASGTIPPSSMGGSATSSRHRPCHGWSQSCDGLEAEYNAADVILMTIVRCTAVLYCYYQFCSLHRLGSKYVLGIAGLFTVFSSFIFTTAIIKFLGSDISELKDALFFLLLVIDLSNSGRLAQLALSGSNQAEVTQNIARGLELLGPAISLDTIVEVLLVGVGTLSGVQRLEVLCMFAVLSVLVNYVVFMTFYPACLSLIFDLSRSGVDMSVVREKAKGSLLLKSLTEEEQKANPVLQRVKLIMTTGLMAVHIYSRVAFSGSDYDAVDKTLTPTLSLNVSNNRTESGEIADIIIKWLTMSADHIVISIVLIALVVKFICFDNRDPLPDQLRQSGPVAIAAKASQTTPIDEEHVEQEKDTENSAAVRTLLFTIEDQSSANASTQTDLLPLRHRLVGPIKPPRPVQECLDILNSTEEGSGPAALSDEEIVSIVHAGGTHCPLHKIESVLDDPERGVRIRRQIIGSRAKMPVGRLDVLPYEHFDYRKVLNACCENVLGYVPIPVGYAGPLLLDGETYYVPMATTEGALVASTNRGCKALSVRGVRSVVEDVGMTRAPCVRFPSVARAAEAKSWIENDENYRVVKTEFDSTSRFGRLKDCHIAMDGPQLYIRFVAITGDAMGMNMVSKGAEMALRRIQLQFPDMQIISLSGNFCCDKKPAAINWIKGRGKRVVTECTISAATLRSVLKTDAKTLVECNKLKNMGGSAMAGSIGGNNAHAANMVTAVFLATGQDPAQNVTSSNCSTAMECWAENSEDLYMTCTMPSLEVGTVGGGTGLPGQSACLEMLGVRGAHATRPGDNAKKLAQIVCATVMAGELSLMAALVNSDLVKSHMRHNRSSIAVNSANNPLNVTVSSCSTIS.

The chain crosses the membrane as a helical span at residues 12 to 32 (FCASHPWEVIVALLTITACML). Residue Asn-37 is glycosylated (N-linked (GlcNAc...) asparagine). The interval 62 to 85 (GAGSGASGTIPPSSMGGSATSSRH) is disordered. A compositionally biased stretch (polar residues) spans 71–82 (IPPSSMGGSATS). One can recognise an SSD domain in the interval 106-263 (DVILMTIVRC…MTFYPACLSL (158 aa)). Transmembrane regions (helical) follow at residues 107–129 (VILM…CSLH), 136–156 (VLGI…TAII), 170–190 (LFFL…QLAL), 208–228 (LLGP…GVGT), and 237–257 (VLCM…MTFY). Asn-342 and Asn-346 each carry an N-linked (GlcNAc...) asparagine glycan. A helical transmembrane segment spans residues 364 to 384 (SADHIVISIVLIALVVKFICF). The interval 385–498 (DNRDPLPDQL…EEIVSIVHAG (114 aa)) is linker. N-linked (GlcNAc...) asparagine glycans are attached at residues Asn-443 and Asn-475. A catalytic region spans residues 499–829 (GTHCPLHKIE…TCTMPSLEVG (331 aa)). Catalysis depends on charge relay system residues Glu-586, Lys-717, and Asp-793. N-linked (GlcNAc...) asparagine glycans are attached at residues Asn-797 and Asn-802. The active-site Proton donor is His-892. N-linked (GlcNAc...) asparagine glycans are attached at residues Asn-896 and Asn-910.

Belongs to the HMG-CoA reductase family. In terms of tissue distribution, highly expressed in embryonic gonadal mesoderm, where expression is initially broad, and then becomes restricted to a segmental pattern at stage 11. Expression is then further restricted to a cluster of cells in each of parasegments 10, 11 and 12, corresponding to the developing gonadal mesoderm. Not expressed in pole cells.

Its subcellular location is the endoplasmic reticulum membrane. It catalyses the reaction (R)-mevalonate + 2 NADP(+) + CoA = (3S)-3-hydroxy-3-methylglutaryl-CoA + 2 NADPH + 2 H(+). It functions in the pathway metabolic intermediate biosynthesis; (R)-mevalonate biosynthesis; (R)-mevalonate from acetyl-CoA: step 3/3. Its activity is regulated as follows. The activity of HMG-CoA-reductase is suppressed by exogenous mevalonate. Its function is as follows. Synthesis of mevalonate for the production of non-sterol isoprenoids, which are essential for growth differentiation. Provides spatial information during embryogenesis to guide migrating primordial germ cells (the pole cells) from the ectoderm to the mesoderm. Also required for association of the pole cells with the gonadal mesoderm. The polypeptide is 3-hydroxy-3-methylglutaryl-coenzyme A reductase (Hmgcr) (Drosophila melanogaster (Fruit fly)).